We begin with the raw amino-acid sequence, 218 residues long: Riboflavin kinase (218 aa).

An N-terminal signal peptide occupies residues 1–19 (MFTWTIYVSLLLVLAGTFL). Mg(2+) contacts are provided by T72 and N74. E155 functions as the Nucleophile in the catalytic mechanism.

This sequence belongs to the flavokinase family. Zn(2+) serves as cofactor. Mg(2+) is required as a cofactor.

It localises to the microsome. It is found in the mitochondrion inner membrane. The protein resides in the endoplasmic reticulum. It carries out the reaction riboflavin + ATP = FMN + ADP + H(+). It functions in the pathway cofactor biosynthesis; FMN biosynthesis; FMN from riboflavin (ATP route): step 1/1. Functionally, catalyzes the phosphorylation of riboflavin (vitamin B2) to form flavin mononucleotide (FMN) coenzyme. This chain is Riboflavin kinase (FMN1), found in Saccharomyces cerevisiae (strain ATCC 204508 / S288c) (Baker's yeast).